We begin with the raw amino-acid sequence, 344 residues long: Autoinducer 2 import system permease protein LsrC (344 aa).

9 helical membrane passes run 13–33, 38–58, 69–89, 90–110, 114–134, 155–175, 212–232, 251–271, and 283–303; these read FFAIVALFVVLVALNPAYFIL, MIFASSQILCLLALGATLVML, TVGLCAIAVGVALNYGYGLAT, AIAFALAIGALAGAFNGLLVV, IPAIVATLGTLGLYRGVMLLW, FIGVSPLGWLVLALLLAGGWL, LNGMLAACAGIVFAAQIGFVP, GISLLGGTGTLLGAFLGAFFL, and LPAWWNDFIAGLVLLGVLVLD. The interval 323-344 is disordered; the sequence is QPGNKGSKQVARFPERKSKEVA. The span at 335-344 shows a compositional bias: basic and acidic residues; that stretch reads FPERKSKEVA.

Belongs to the binding-protein-dependent transport system permease family. AraH/RbsC subfamily. In terms of assembly, the complex is composed of two ATP-binding proteins (LsrA), two transmembrane proteins (LsrC and LsrD) and a solute-binding protein (LsrB).

The protein localises to the cell inner membrane. Functionally, part of the ABC transporter complex LsrABCD involved in autoinducer 2 (AI-2) import. Probably responsible for the translocation of the substrate across the membrane. This chain is Autoinducer 2 import system permease protein LsrC (lsrC), found in Klebsiella pneumoniae subsp. pneumoniae (strain ATCC 700721 / MGH 78578).